The chain runs to 1369 residues: Rho-associated protein kinase 1 (1369 aa).

Ser2 is subject to N-acetylserine. The Protein kinase domain occupies 76–338 (YEVVKVIGRG…VEEIKRHLFF (263 aa)). Residues 82 to 90 (IGRGAFGEV) and Lys105 contribute to the ATP site. Asp198 (proton acceptor) is an active-site residue. In terms of domain architecture, AGC-kinase C-terminal spans 341–409 (DQWAWETLRD…YSNRRYLPSA (69 aa)). Positions 368-727 (FDDLEEDKGD…KKLKEEREAR (360 aa)) are interaction with FHOD1. Residues 422–692 (KNVQESLQKT…RLEQEVNEHK (271 aa)) adopt a coiled-coil conformation. The REM-1 domain occupies 479–556 (SAVSQIEKEK…LEEANDLLRT (78 aa)). The interval 707–946 (EAKSVAMCEM…TVSRLEEANN (240 aa)) is SHROOM3 binding. The region spanning 949–1015 (TKDIELLRKE…LAEIMNRKDF (67 aa)) is the RhoBD domain. Positions 998–1010 (LKTQAVNKLAEIM) are RHOA binding. Residues 1011–1102 (NRKDFKIDRK…KLLDLSDSTS (92 aa)) are a coiled coil. Ser1105 and Ser1108 each carry phosphoserine. Positions 1115-1369 (NLPVGSACIP…VVKNTSGKTS (255 aa)) are auto-inhibitory. Positions 1133 to 1332 (SSRIEGWLSV…WVTHLVKKIP (200 aa)) constitute a PH domain. The segment at 1243 to 1298 (GHEFIPTLYHFPANCEACAKPLWHVFKPPPALECRRCHVKSHRDHLDKKEDLIPPC) adopts a Phorbol-ester/DAG-type zinc-finger fold. The residue at position 1343 (Ser1343) is a Phosphoserine.

Belongs to the protein kinase superfamily. AGC Ser/Thr protein kinase family. As to quaternary structure, homodimer. Interacts with GEM, MYLC2B, RHOE, LIMK1, LIMK2, TSG101, CHORDC1, DAPK3, PFN1, PTEN and JIP3. Interacts with FHOD1 in a Src-dependent manner. Interacts with ITGB1BP1 (via N-terminus and PTB domain). Interacts with RHOA (activated by GTP), RHOB, RHOC and PPP1R12A. Interacts with SHROOM3. The cofactor is Mg(2+). In terms of processing, autophosphorylated on serine and threonine residues. Cleaved by caspase-3 during apoptosis. This leads to constitutive activation of the kinase and membrane blebbing. Highly expressed in brain, spleen, lung, liver, skeletal muscle, kidney and testis.

Its subcellular location is the cytoplasm. It is found in the cytoskeleton. The protein resides in the microtubule organizing center. It localises to the centrosome. The protein localises to the centriole. Its subcellular location is the golgi apparatus membrane. It is found in the cell projection. The protein resides in the bleb. It localises to the cell membrane. The protein localises to the lamellipodium. Its subcellular location is the ruffle. The enzyme catalyses L-seryl-[protein] + ATP = O-phospho-L-seryl-[protein] + ADP + H(+). It catalyses the reaction L-threonyl-[protein] + ATP = O-phospho-L-threonyl-[protein] + ADP + H(+). Its activity is regulated as follows. Activated by RHOA binding. Inhibited by Y-27632. Protein kinase which is a key regulator of the actin cytoskeleton and cell polarity. Involved in regulation of smooth muscle contraction, actin cytoskeleton organization, stress fiber and focal adhesion formation, neurite retraction, cell adhesion and motility via phosphorylation of DAPK3, GFAP, LIMK1, LIMK2, MYL9/MLC2, TPPP, PFN1 and PPP1R12A. Phosphorylates FHOD1 and acts synergistically with it to promote SRC-dependent non-apoptotic plasma membrane blebbing. Phosphorylates JIP3 and regulates the recruitment of JNK to JIP3 upon UVB-induced stress. Acts as a suppressor of inflammatory cell migration by regulating PTEN phosphorylation and stability. Acts as a negative regulator of VEGF-induced angiogenic endothelial cell activation. Required for centrosome positioning and centrosome-dependent exit from mitosis. Plays a role in terminal erythroid differentiation. Inhibits podocyte motility via regulation of actin cytoskeletal dynamics and phosphorylation of CFL1. Promotes keratinocyte terminal differentiation. Involved in osteoblast compaction through the fibronectin fibrillogenesis cell-mediated matrix assembly process, essential for osteoblast mineralization. May regulate closure of the eyelids and ventral body wall by inducing the assembly of actomyosin bundles. The protein is Rho-associated protein kinase 1 (Rock1) of Rattus norvegicus (Rat).